A 436-amino-acid polypeptide reads, in one-letter code: Hydroxycinnamoyltransferase (436 aa).

Residues His-154 and Asp-383 each act as proton acceptor in the active site.

This sequence belongs to the plant acyltransferase family. As to expression, mostly expressed in stems, and, to a lower extent, in bulbs.

The protein operates within phenylpropanoid metabolism. Its function is as follows. Hydroxycinnamoyl transferase that catalyzes the transfer of an acyl from p-coumaryol-CoA to various acyl acceptors. Can use feruloyl-CoA and caffeoyl-CoA as acyl donors. This chain is Hydroxycinnamoyltransferase, found in Narcissus pseudonarcissus (Daffodil).